Consider the following 446-residue polypeptide: Phosphoglucosamine mutase (446 aa).

Serine 101 serves as the catalytic Phosphoserine intermediate. The Mg(2+) site is built by serine 101, aspartate 240, aspartate 242, and aspartate 244. Serine 101 carries the post-translational modification Phosphoserine.

It belongs to the phosphohexose mutase family. Requires Mg(2+) as cofactor. Activated by phosphorylation.

It catalyses the reaction alpha-D-glucosamine 1-phosphate = D-glucosamine 6-phosphate. In terms of biological role, catalyzes the conversion of glucosamine-6-phosphate to glucosamine-1-phosphate. This Pseudomonas putida (strain ATCC 700007 / DSM 6899 / JCM 31910 / BCRC 17059 / LMG 24140 / F1) protein is Phosphoglucosamine mutase.